The following is a 143-amino-acid chain: D-aminoacyl-tRNA deacylase (143 aa).

The Gly-cisPro motif, important for rejection of L-amino acids motif lies at 135 to 136 (GP).

It belongs to the DTD family. In terms of assembly, homodimer.

It is found in the cytoplasm. It catalyses the reaction glycyl-tRNA(Ala) + H2O = tRNA(Ala) + glycine + H(+). The catalysed reaction is a D-aminoacyl-tRNA + H2O = a tRNA + a D-alpha-amino acid + H(+). An aminoacyl-tRNA editing enzyme that deacylates mischarged D-aminoacyl-tRNAs. Also deacylates mischarged glycyl-tRNA(Ala), protecting cells against glycine mischarging by AlaRS. Acts via tRNA-based rather than protein-based catalysis; rejects L-amino acids rather than detecting D-amino acids in the active site. By recycling D-aminoacyl-tRNA to D-amino acids and free tRNA molecules, this enzyme counteracts the toxicity associated with the formation of D-aminoacyl-tRNA entities in vivo and helps enforce protein L-homochirality. The chain is D-aminoacyl-tRNA deacylase from Mycobacterium bovis (strain ATCC BAA-935 / AF2122/97).